The chain runs to 525 residues: Nucleolar complex protein 4 homolog (525 aa).

3 helical membrane-spanning segments follow: residues 305 to 325 (AAYDIGGAISLSALNGLFVPI), 356 to 376 (FFHLANIFLSSTHLPVYLVAA), and 384 to 404 (LSLTAPPTALLILLPFICNLI).

This sequence belongs to the CBF/MAK21 family.

It localises to the nucleus membrane. Its subcellular location is the nucleus. The protein localises to the nucleolus. In Danio rerio (Zebrafish), this protein is Nucleolar complex protein 4 homolog (noc4l).